The primary structure comprises 106 residues: UPF0642 protein YBL028C (106 aa).

Over residues 1–12 (MAKSLRASSHLN) the composition is skewed to polar residues. Disordered stretches follow at residues 1 to 21 (MAKS…RRGV) and 52 to 106 (KEEQ…FTRF). Over residues 62-72 (DEKKSNEEAPR) the composition is skewed to basic and acidic residues. The segment covering 83 to 106 (GRHHTYKKAKLMKQSKKKTSFTRF) has biased composition (basic residues).

It belongs to the UPF0642 family.

The polypeptide is UPF0642 protein YBL028C (Saccharomyces cerevisiae (strain ATCC 204508 / S288c) (Baker's yeast)).